The sequence spans 157 residues: NADPH-dependent 7-cyano-7-deazaguanine reductase (157 aa).

Cys-55 serves as the catalytic Thioimide intermediate. The Proton donor role is filled by Asp-62. Substrate contacts are provided by residues 77–79 and 96–97; these read VES and HE.

It belongs to the GTP cyclohydrolase I family. QueF type 1 subfamily.

Its subcellular location is the cytoplasm. It catalyses the reaction 7-aminomethyl-7-carbaguanine + 2 NADP(+) = 7-cyano-7-deazaguanine + 2 NADPH + 3 H(+). The protein operates within tRNA modification; tRNA-queuosine biosynthesis. Catalyzes the NADPH-dependent reduction of 7-cyano-7-deazaguanine (preQ0) to 7-aminomethyl-7-deazaguanine (preQ1). In Neisseria meningitidis serogroup B (strain ATCC BAA-335 / MC58), this protein is NADPH-dependent 7-cyano-7-deazaguanine reductase.